The following is a 478-amino-acid chain: Transposon Ty1-H Gag polyprotein (478 aa).

3 stretches are compositionally biased toward polar residues: residues M1–P10, T48–S60, and Q127–F152. Disordered stretches follow at residues M1 to P84, P126 to M174, and G390 to Y478. A compositionally biased stretch (low complexity) spans T153–T165. The RNA-binding stretch occupies residues N337–H439. A compositionally biased stretch (low complexity) spans N440–S456. Positions K457–N466 are enriched in polar residues. Basic and acidic residues predominate over residues N467 to Y478.

As to quaternary structure, homotrimer.

It is found in the cytoplasm. Functionally, capsid protein (CA) is the structural component of the virus-like particle (VLP), forming the shell that encapsulates the retrotransposons dimeric RNA genome. The particles are assembled from trimer-clustered units and there are holes in the capsid shells that allow for the diffusion of macromolecules. CA also has nucleocapsid-like chaperone activity, promoting primer tRNA(i)-Met annealing to the multipartite primer-binding site (PBS), dimerization of Ty1 RNA and initiation of reverse transcription. In Saccharomyces cerevisiae (strain ATCC 204508 / S288c) (Baker's yeast), this protein is Transposon Ty1-H Gag polyprotein (TY1A-H).